A 299-amino-acid polypeptide reads, in one-letter code: MMENSTTEARNEATMHLDEMTVEEALITMNKEDQQVPLAVRKAIPQLTKVIKKTIAQYKKGGRLIYIGAGTSGRLGVLDAAECVPTFNTDPHEIIGIIAGGQHAMTMAVEGAEDHKKLAEEDLKNIDLTSKDVVIGIAASGKTPYVIGGLTFANTIGATTVSISCNEHAVISEIAQYPVEVKVGPEVLTGSTRLKSGTAQKLILNMISTITMVGVGKVYDNLMIDVKATNQKLIDRSVRIIQEICAITYDEAMALYQVSEHDVKVATVMGMCGISKEEATRRLLNNGDIVKRAIRDRQP.

The 164-residue stretch at 54–217 folds into the SIS domain; it reads TIAQYKKGGR…STITMVGVGK (164 aa). Catalysis depends on Glu-82, which acts as the Proton donor. Glu-113 is an active-site residue.

It belongs to the GCKR-like family. MurNAc-6-P etherase subfamily. As to quaternary structure, homodimer.

It catalyses the reaction N-acetyl-D-muramate 6-phosphate + H2O = N-acetyl-D-glucosamine 6-phosphate + (R)-lactate. It participates in amino-sugar metabolism; N-acetylmuramate degradation. Functionally, specifically catalyzes the cleavage of the D-lactyl ether substituent of MurNAc 6-phosphate, producing GlcNAc 6-phosphate and D-lactate. In Staphylococcus aureus (strain USA300), this protein is N-acetylmuramic acid 6-phosphate etherase.